The sequence spans 310 residues: uncharacterized protein (310 aa).

Belongs to the YiaX1 family.

This is an uncharacterized protein from Salmonella typhimurium (strain LT2 / SGSC1412 / ATCC 700720).